The chain runs to 822 residues: uncharacterized protein (822 aa).

The Cytoplasmic segment spans residues 1-13; that stretch reads MCHNSVRSGNKAG. The chain crosses the membrane as a helical span at residues 14–34; that stretch reads FLGIKFGSALLSIATGAIAIA. The Extracellular portion of the chain corresponds to 35-44; that stretch reads LLCKFHDHEA. A helical transmembrane segment spans residues 45 to 65; that stretch reads VLIVIVCSTLLYGIPSLISFI. Residues 66–76 lie on the Cytoplasmic side of the membrane; that stretch reads TETVFAPSKFH. A helical membrane pass occupies residues 77-97; the sequence is IGYFYNVLNFALPLITMGCTV. Over 98-120 the chain is Extracellular; sequence DYFHNTLRSPISVQSESHRVYIT. Residues 121 to 141 form a helical membrane-spanning segment; it reads TLDSLLIFTLFINGIQLGFFL. At 142-822 the chain is on the cytoplasmic side; sequence KDGNANNFGS…PVEELVSPSK (681 aa). The tract at residues 271–290 is disordered; sequence RNTQQATKVPTEKKSNHRSS. Ser690 carries the post-translational modification Phosphoserine. Polar residues predominate over residues 698–712; that stretch reads TLQSSHSPTKSTSGN. Disordered regions lie at residues 698 to 728 and 751 to 783; these read TLQS…STVN and NGEE…GYPE. The segment covering 761–776 has biased composition (low complexity); it reads QSIQSSSSGSEQESAG.

The protein resides in the membrane. This is an uncharacterized protein from Saccharomyces cerevisiae (strain ATCC 204508 / S288c) (Baker's yeast).